Reading from the N-terminus, the 347-residue chain is Probable G-protein coupled receptor 148 (347 aa).

Residues 1-51 lie on the Extracellular side of the membrane; sequence MGDELAPCPVGTTAWPALIQLISKTPCMPQAASNTSLGLGDLRVPSSMLYW. N34 is a glycosylation site (N-linked (GlcNAc...) asparagine). A helical transmembrane segment spans residues 52-72; sequence LFLPSSLLAAATLAVSPLLLV. Residues 73-85 lie on the Cytoplasmic side of the membrane; it reads TILRNQRLRQEPH. The chain crosses the membrane as a helical span at residues 86 to 106; sequence YLLPANILLSDLAYILLHMLI. Residues 107–130 lie on the Extracellular side of the membrane; sequence SSSSLGGWELGRMACGILTDAVFA. Residues 131-151 traverse the membrane as a helical segment; sequence ACTSTILSFTAIVLHTYLAVI. At 152–165 the chain is on the cytoplasmic side; it reads HPLRYLSFMSHGAA. The chain crosses the membrane as a helical span at residues 166-186; it reads WKAVALIWLVACCFPTFLIWL. Over 187 to 214 the chain is Extracellular; sequence SKWQDAQLEEQGASYILPPSMGTQPGCG. The chain crosses the membrane as a helical span at residues 215 to 235; it reads LLVIVTYTSILCVLFLCTALI. The Cytoplasmic portion of the chain corresponds to 236 to 261; that stretch reads ANCFWRIYAEAKTSGIWGQGYSRARG. Residues 262-282 traverse the membrane as a helical segment; it reads TLLIHSVLITLYVSTGVVFSL. The Extracellular segment spans residues 283 to 299; that stretch reads DMVLTRYHHIDSGTHTW. The helical transmembrane segment at 300 to 322 threads the bilayer; it reads LLAANSEVLMMLPRAMLTYLYLL. The Cytoplasmic segment spans residues 323–347; sequence RYRQLLGMVRGHLPSRRHQAIFTIS.

Belongs to the G-protein coupled receptor 1 family. As to expression, expression restricted to nervous system and testis. Is also detected in several tumors types, most notably prostate cancer.

Its subcellular location is the cell membrane. Orphan receptor. The polypeptide is Probable G-protein coupled receptor 148 (GPR148) (Homo sapiens (Human)).